The sequence spans 393 residues: Iripin-3 (393 aa).

The first 16 residues, 1 to 16 (MKVITAFLSVFVLCSA), serve as a signal peptide directing secretion. N-linked (GlcNAc...) asparagine glycans are attached at residues Asn-104 and Asn-265.

Belongs to the serpin family. As to quaternary structure, interacts with human KLKB1. Interacts with human ST14. Interacts with human F2 (thrombin). As to expression, saliva (at protein level). Expressed in salivary gland. Expressed in ovary during blood feeding.

It is found in the secreted. Its function is as follows. Serine protease inhibitor that modulates blood feeding of ticks on vertebrate species. Moderately inhibits host plasma kallikrein (KLKB1), matriptase (ST14), trypsin, plasmin (PLG), thrombin (F2) and coagulation factor VIIa (F7). Slightly inhibits host alpha-chymotrypsin, tPA/tissue-type plasminogen activator (PLAT), uPA/urokinase-type plasminogen activator (PLAU) and coagulation factor XIIa (F12). Slightly inhibits the extrinsic pathway while not affecting the intrinsic and common pathways of host blood coagulation. Decreases synthesis and secretion of IL6 by mouse bone marrow-derived macrophages. Decreases viability of mouse B- and T-cells. Decreases proliferation of mouse CD4+ T-cells in response to stimulation. Inhibits Th1 immune responses in mouse cells. Promotes differentiation of mouse regulatory T-cells. The polypeptide is Iripin-3 (Ixodes ricinus (Common tick)).